The sequence spans 131 residues: Global transcriptional regulator Spx (131 aa).

A disulfide bridge connects residues Cys10 and Cys13.

Belongs to the ArsC family. Spx subfamily. As to quaternary structure, interacts with the C-terminal domain of the alpha subunit of the RNAP.

Its subcellular location is the cytoplasm. Its function is as follows. Global transcriptional regulator that plays a key role in stress response and exerts either positive or negative regulation of genes. Acts by interacting with the C-terminal domain of the alpha subunit of the RNA polymerase (RNAP). This interaction can enhance binding of RNAP to the promoter region of target genes and stimulate their transcription, or block interaction of RNAP with activator. The polypeptide is Global transcriptional regulator Spx (Staphylococcus saprophyticus subsp. saprophyticus (strain ATCC 15305 / DSM 20229 / NCIMB 8711 / NCTC 7292 / S-41)).